The following is a 407-amino-acid chain: Serine/threonine transporter SstT (407 aa).

9 consecutive transmembrane segments (helical) span residues 11-31 (IIHG…VILA), 43-63 (FLGD…VFVL), 82-102 (IISL…LLSF), 141-161 (ALMT…GIAL), 192-212 (LGIF…ALAG), 216-236 (LLMV…PLIV), 298-318 (MGGA…TLGV), 339-359 (ASGV…LFGI), and 363-383 (IAMQ…SAET).

The protein belongs to the dicarboxylate/amino acid:cation symporter (DAACS) (TC 2.A.23) family.

The protein resides in the cell inner membrane. It catalyses the reaction L-serine(in) + Na(+)(in) = L-serine(out) + Na(+)(out). The enzyme catalyses L-threonine(in) + Na(+)(in) = L-threonine(out) + Na(+)(out). Functionally, involved in the import of serine and threonine into the cell, with the concomitant import of sodium (symport system). The chain is Serine/threonine transporter SstT from Shewanella denitrificans (strain OS217 / ATCC BAA-1090 / DSM 15013).